The sequence spans 283 residues: Elongation factor Ts (283 aa).

Positions 80 to 83 (TDFV) are involved in Mg(2+) ion dislocation from EF-Tu.

It belongs to the EF-Ts family.

It localises to the cytoplasm. Associates with the EF-Tu.GDP complex and induces the exchange of GDP to GTP. It remains bound to the aminoacyl-tRNA.EF-Tu.GTP complex up to the GTP hydrolysis stage on the ribosome. The sequence is that of Elongation factor Ts from Haemophilus influenzae (strain PittGG).